Consider the following 394-residue polypeptide: Probable sugar efflux transporter (394 aa).

The next 12 helical transmembrane spans lie at 15–35 (VLML…PVGL), 50–70 (VGLM…PMML), 79–99 (MLLM…SVAW), 109–129 (IGIA…AIRV), 137–157 (QALS…LPIG), 168–188 (ITFA…LKLL), 209–229 (PALV…YTAY), 249–269 (FLLL…SIYG), 272–292 (FPAT…MCLY), 299–319 (LAVS…GLAV), 333–353 (VAMS…ALLG), and 362–382 (MASV…WCAW).

Belongs to the major facilitator superfamily. SotB (TC 2.A.1.2) family.

It is found in the cell inner membrane. Functionally, involved in the efflux of sugars. The physiological role may be the reduction of the intracellular concentration of toxic sugars or sugar metabolites. The protein is Probable sugar efflux transporter of Erwinia tasmaniensis (strain DSM 17950 / CFBP 7177 / CIP 109463 / NCPPB 4357 / Et1/99).